Reading from the N-terminus, the 91-residue chain is Mercuric transport protein periplasmic component (91 aa).

The signal sequence occupies residues 1–19; that stretch reads MKKLFASLALAAAVAPVWA. The region spanning 22 to 88 is the HMA domain; it reads QTVTLAVPGM…ATADAGYPSS (67 aa). The Hg(2+) site is built by Cys33 and Cys36.

The protein belongs to the MerP family. In terms of assembly, monomer.

The protein localises to the periplasm. Involved in mercury resistance. Acts as a mercury scavenger that specifically binds to a mercuric ion in the periplasm and probably passes it to the cytoplasmic mercuric reductase MerA via the mercuric transport protein MerT. This Shigella flexneri protein is Mercuric transport protein periplasmic component.